Here is a 100-residue protein sequence, read N- to C-terminus: Histone-like protein p6 (100 aa).

A DNA-binding region spans residues 1 to 19 (MRKMMQREVTYTTAQLARM).

The protein belongs to the phi29likevirus histone-like protein p6 family. As to quaternary structure, homodimer. Homomultimer. Binds to double-stranded DNA giving rise to multimeric nucleoprotein complexes. Binding specificity for the viral DNA is based on supercoiling, the viral genome having a negative superhelicity lower than that of plasmid DNA. Interacts with the DNA replication protein p17; this interaction optimizes the binding of protein p6 at the viral DNA ends, thus favoring the initiation of replication.

Functionally, histone-like nucleoprotein that binds to the viral dsDNA and responsible for wrapping and compacting the viral DNA about 4-fold. Forms a nucleoprotein complex in which the DNA adopts a right-handed toroidal conformation winding around a protein core. Binds ito most, if not all, the viral genome, although with different affinity, the highest one corresponding to the genome ends. The formation of the nucleoprotein complex at the genome ends, activates the initiation of viral DNA replication. The binding of p6 would recruit the complex formed by the TP and the DNA polymerase to the origin. Protein p6 also represses early transcription from promoter C2, and, together with protein p4, represses transcription from promoters A2b and A2c and activates late transcription from promoter A3. Protein p6 is therefore involved in the early to late transcription switch. The formation of the nucleoprotein complex at the right end of the phage genome where the early promoter C2 is located affects local topology, which may contribute to the promoter repression. In Bacillus phage B103 (Bacteriophage B103), this protein is Histone-like protein p6 (6).